A 1361-amino-acid chain; its full sequence is DNA-directed RNA polymerase subunit beta (1361 aa).

Belongs to the RNA polymerase beta chain family. The RNAP catalytic core consists of 2 alpha, 1 beta, 1 beta' and 1 omega subunit. When a sigma factor is associated with the core the holoenzyme is formed, which can initiate transcription.

It catalyses the reaction RNA(n) + a ribonucleoside 5'-triphosphate = RNA(n+1) + diphosphate. Functionally, DNA-dependent RNA polymerase catalyzes the transcription of DNA into RNA using the four ribonucleoside triphosphates as substrates. The chain is DNA-directed RNA polymerase subunit beta from Saccharophagus degradans (strain 2-40 / ATCC 43961 / DSM 17024).